The chain runs to 952 residues: DNA topoisomerase 1 (952 aa).

Residues 12–135 form the Toprim domain; the sequence is RRLVIVESPA…VKRMVFHEIT (124 aa). 2 residues coordinate Mg(2+): E18 and D104. The 453-residue stretch at 150–602 folds into the Topo IA-type catalytic domain; sequence NQKLVDAQET…RFYFGEGDGT (453 aa). The interval 184–189 is interaction with DNA; it reads SAGRVQ. Y334 (O-(5'-phospho-DNA)-tyrosine intermediate) is an active-site residue. The interval 847 to 952 is disordered; sequence RFGPYVTDGE…KATASKTSED (106 aa). Positions 871–884 are enriched in basic and acidic residues; sequence TPERGYELLAEKRA. Over residues 885–906 the composition is skewed to basic residues; that stretch reads KGPAKKTAKKAVKKTAAKKAPA. Low complexity-rich tracts occupy residues 907 to 930 and 937 to 952; these read KKAAATKKTAAAKTTAAKKTAAKS and AKTAAKKATASKTSED.

The protein belongs to the type IA topoisomerase family. In terms of assembly, monomer. Mg(2+) serves as cofactor.

It catalyses the reaction ATP-independent breakage of single-stranded DNA, followed by passage and rejoining.. Releases the supercoiling and torsional tension of DNA, which is introduced during the DNA replication and transcription, by transiently cleaving and rejoining one strand of the DNA duplex. Introduces a single-strand break via transesterification at a target site in duplex DNA. The scissile phosphodiester is attacked by the catalytic tyrosine of the enzyme, resulting in the formation of a DNA-(5'-phosphotyrosyl)-enzyme intermediate and the expulsion of a 3'-OH DNA strand. The free DNA strand then undergoes passage around the unbroken strand, thus removing DNA supercoils. Finally, in the religation step, the DNA 3'-OH attacks the covalent intermediate to expel the active-site tyrosine and restore the DNA phosphodiester backbone. In terms of biological role, relaxes supercoiled plasmid in vitro; in the presence of sIHF (integration host factor) relaxation is decreased. The sequence is that of DNA topoisomerase 1 from Streptomyces coelicolor (strain ATCC BAA-471 / A3(2) / M145).